The sequence spans 212 residues: Leucyl/phenylalanyl-tRNA--protein transferase (212 aa).

The protein belongs to the L/F-transferase family.

It localises to the cytoplasm. It carries out the reaction N-terminal L-lysyl-[protein] + L-leucyl-tRNA(Leu) = N-terminal L-leucyl-L-lysyl-[protein] + tRNA(Leu) + H(+). It catalyses the reaction N-terminal L-arginyl-[protein] + L-leucyl-tRNA(Leu) = N-terminal L-leucyl-L-arginyl-[protein] + tRNA(Leu) + H(+). The catalysed reaction is L-phenylalanyl-tRNA(Phe) + an N-terminal L-alpha-aminoacyl-[protein] = an N-terminal L-phenylalanyl-L-alpha-aminoacyl-[protein] + tRNA(Phe). Its function is as follows. Functions in the N-end rule pathway of protein degradation where it conjugates Leu, Phe and, less efficiently, Met from aminoacyl-tRNAs to the N-termini of proteins containing an N-terminal arginine or lysine. This chain is Leucyl/phenylalanyl-tRNA--protein transferase, found in Flavobacterium johnsoniae (strain ATCC 17061 / DSM 2064 / JCM 8514 / BCRC 14874 / CCUG 350202 / NBRC 14942 / NCIMB 11054 / UW101) (Cytophaga johnsonae).